The sequence spans 184 residues: Myosin regulatory light chain 1 (184 aa).

The interval Met1–Gln29 is disordered. Residue Ser36 is modified to Phosphoserine. EF-hand domains are found at residues Ser45–Asp80 and Ser114–Arg149. The Ca(2+) site is built by Asp58, Asp60, Asp62, Asn64, and Asp69.

In terms of assembly, binds to myosin II chains myo2 and myo3.

It is found in the cytoplasm. The polypeptide is Myosin regulatory light chain 1 (rlc1) (Schizosaccharomyces pombe (strain 972 / ATCC 24843) (Fission yeast)).